The chain runs to 448 residues: Tapasin (448 aa).

The N-terminal stretch at 1-20 (MKSLSLLLAVALGLATAVSA) is a signal peptide. Residues 21-414 (GPAVIECWFV…LSGPSLEDSV (394 aa)) are Lumenal-facing. Cysteines 27 and 91 form a disulfide. N-linked (GlcNAc...) asparagine glycosylation occurs at Asn-253. Positions 292-399 (PKVSLMPATL…PASGRSAEVT (108 aa)) constitute an Ig-like C1-type domain. Cys-315 and Cys-382 are oxidised to a cystine. The chain crosses the membrane as a helical span at residues 415–435 (GLFLSAFLLLGLFKALGWAAV). At 436 to 448 (YLSTCKDSKKKAE) the chain is on the cytoplasmic side.

As to quaternary structure, heterodimer with PDIA3; disulfide-linked. Obligatory mediator for the interaction between newly assembled MHC class I molecules, calreticulin, PDIA3 and TAP. Up to 4 MHC class I/tapasin complexes bind to 1 TAP. Interacts with HLA-G-B2M complex; this interaction is required for loading of high affinity peptides. On its own or as part of MHC class I peptide loading complex, interacts with ligand-free MR1 or MR1-B2M complex, providing for stable MR1 pools ready for metabolite antigen processing. As to expression, neutrophils, mostly in fully differentiated cells.

Its subcellular location is the endoplasmic reticulum membrane. Its function is as follows. Involved in the association of MHC class I with transporter associated with antigen processing (TAP) and in the assembly of MHC class I with peptide (peptide loading). This chain is Tapasin, found in Homo sapiens (Human).